The sequence spans 115 residues: uncharacterized protein (115 aa).

The disordered stretch occupies residues 1 to 74; it reads MGTGLRSQSL…VPGSLGDTEQ (74 aa).

This is an uncharacterized protein from Homo sapiens (Human).